The sequence spans 316 residues: Polyprenyl transferase prhE (316 aa).

Helical transmembrane passes span 45 to 65 (VVGVAYTAAISPVTLPSTFLL), 69 to 89 (VILSLWGFCIRSAGCAWNDLI), 114 to 134 (GAALLAAFMFGCGGSLLLLLP), 135 to 155 (SQCAFEAAIVVFFALLYPFGK), 163 to 183 (LILTNIAWAIPMAMSSLDMSP), 188 to 208 (IPTLAMSFSIASVIVMIDIVY), 231 to 253 (ITDQIAYGLFFSGTLSLLVGGIL), 257 to 276 (GFPFLIFSVGGHFLGFLRFL), and 296 to 316 (SCLLATMLLVFGLCFEYCVRL).

This sequence belongs to the UbiA prenyltransferase family. It depends on Mg(2+) as a cofactor.

Its subcellular location is the membrane. It carries out the reaction 3,5-dimethylorsellinate + (2E,6E)-farnesyl diphosphate = (3R)-3-farnesyl-6-hydroxy-2,3,5-trimethyl-4-oxocyclohexa-1,5-diene-1-carboxylate + diphosphate + H(+). The protein operates within secondary metabolite biosynthesis; terpenoid biosynthesis. In terms of biological role, polyprenyl transferase; part of the gene cluster that mediates the biosynthesis of paraherquonin, a meroterpenoid with a unique, highly congested hexacyclic molecular architecture. The first step of the pathway is the synthesis of 3,5-dimethylorsellinic acid (DMOA) by the polyketide synthase prhL. Synthesis of DMOA is followed by farnesylation by the prenyltransferase prhE, methylesterification by the methyl-transferase prhM, epoxidation of the prenyl chain by the flavin-dependent monooxygenase prhF, and cyclization of the farnesyl moiety by the terpene cyclase prhH, to yield the tetracyclic intermediate, protoaustinoid A. The short chain dehydrogenase prhI then oxidizes the C-3 alcohol group of the terpene cyclase product to transform protoaustinoid A into protoaustinoid B. The FAD-binding monooxygenase prhJ catalyzes the oxidation of protoaustinoid B into preaustinoid A which is further oxidized into preaustinoid A1 by FAD-binding monooxygenase phrK. Finally, prhA leads to berkeleydione via the berkeleyone B intermediate. PrhA is a multifunctional dioxygenase that first desaturates at C5-C6 to form berkeleyone B, followed by rearrangement of the A/B-ring to form the cycloheptadiene moiety in berkeleydione. Berkeleydione serves as the key intermediate for the biosynthesis of paraherquonin as well as many other meroterpenoids. The cytochrome P450 monooxygenases prhB, prhD, and prhN, as well as the isomerase prhC, are probably involved in the late stage of paraherquonin biosynthesis, after the production of berkeleydione. Especially prhC might be a multifunctional enzyme that catalyzes the D-ring expansion via intramolecular methoxy rearrangement, as well as the hydrolysis of the expanded D-ring. The polypeptide is Polyprenyl transferase prhE (Penicillium brasilianum).